The chain runs to 442 residues: GDP-L-galactose phosphorylase 1 (442 aa).

His-238 serves as the catalytic Tele-GMP-histidine intermediate.

This sequence belongs to the GDPGP1 family. In terms of assembly, interacts with TLP1. As to expression, expressed in leaves, stems, roots, flowers and siliques. Highest expression in green tissues.

The protein resides in the cytoplasm. It localises to the nucleus. It carries out the reaction GDP-beta-L-galactose + phosphate = beta-L-galactose 1-phosphate + GDP + H(+). It functions in the pathway cofactor biosynthesis; L-ascorbate biosynthesis via GDP-alpha-D-mannose pathway; L-ascorbate from GDP-alpha-D-mannose: step 2/5. With respect to regulation, not inhibited by dithiothreitol, N-ethylmaleimide, phenylmethane sulfonyl fluoride, ascorbate, L-galactose and L-galactonolactone. Its function is as follows. Catalyzes a reaction of the Smirnoff-Wheeler pathway, the major route to ascorbate biosynthesis in plants. Acts as a phosphorylase rather than as a transferase. Uses preferentially GDP-L-galactose and GDP-D-glucose as substrates. Lower activity with GDP-L-fucose, very low activity with GDP-D-mannose, and no activity with UDP-D-glucose, UDP-D-galactose or ADP-D-glucose. Highly specific for inorganic phosphate as the guanylyl acceptor. The protein is GDP-L-galactose phosphorylase 1 (VTC2) of Arabidopsis thaliana (Mouse-ear cress).